Here is a 353-residue protein sequence, read N- to C-terminus: 3-isopropylmalate dehydrogenase (353 aa).

75 to 88 (GPKWENLPHEHKPE) serves as a coordination point for NAD(+). The substrate site is built by Arg95, Arg105, Arg133, and Asp219. Positions 219, 243, and 247 each coordinate Mg(2+). 276–288 (GSAPDIAGKNIAN) is an NAD(+) binding site.

The protein belongs to the isocitrate and isopropylmalate dehydrogenases family. LeuB type 1 subfamily. In terms of assembly, homodimer. Mg(2+) serves as cofactor. Requires Mn(2+) as cofactor.

Its subcellular location is the cytoplasm. It carries out the reaction (2R,3S)-3-isopropylmalate + NAD(+) = 4-methyl-2-oxopentanoate + CO2 + NADH. Its pathway is amino-acid biosynthesis; L-leucine biosynthesis; L-leucine from 3-methyl-2-oxobutanoate: step 3/4. Catalyzes the oxidation of 3-carboxy-2-hydroxy-4-methylpentanoate (3-isopropylmalate) to 3-carboxy-4-methyl-2-oxopentanoate. The product decarboxylates to 4-methyl-2 oxopentanoate. This is 3-isopropylmalate dehydrogenase from Chlorobium luteolum (strain DSM 273 / BCRC 81028 / 2530) (Pelodictyon luteolum).